A 521-amino-acid polypeptide reads, in one-letter code: Outer membrane protein assembly factor BamB (521 aa).

An N-terminal signal peptide occupies residues 1–19; that stretch reads MKKLFLVIVPLLLSLLATS. A lipid anchor (N-palmitoyl cysteine) is attached at C20. Residue C20 is the site of S-diacylglycerol cysteine attachment. Residues 418 to 521 are disordered; it reads KSGSIESSPK…IGDFSKGDSD (104 aa). Over residues 429–444 the composition is skewed to basic and acidic residues; that stretch reads LPDKKVDSNKTSKNDT. Over residues 445–477 the composition is skewed to polar residues; it reads DSNPATTATSTKDIQNPANQEMINSTPVSNTST.

The protein belongs to the BamB family. Part of the Bam complex.

It localises to the cell outer membrane. Functionally, part of the outer membrane protein assembly complex, which is involved in assembly and insertion of beta-barrel proteins into the outer membrane. The protein is Outer membrane protein assembly factor BamB of Francisella salina.